The sequence spans 155 residues: Protein SprT-like (155 aa).

One can recognise a SprT-like domain in the interval 7–144; that stretch reads QRHMEEVSLQ…CGSCGGKLKQ (138 aa). His-67 contributes to the Zn(2+) binding site. Residue Glu-68 is part of the active site. Zn(2+) is bound at residue His-71.

This sequence belongs to the SprT family. Zn(2+) serves as cofactor.

The protein localises to the cytoplasm. The polypeptide is Protein SprT-like (Listeria welshimeri serovar 6b (strain ATCC 35897 / DSM 20650 / CCUG 15529 / CIP 8149 / NCTC 11857 / SLCC 5334 / V8)).